Here is a 515-residue protein sequence, read N- to C-terminus: Arabinose import ATP-binding protein AraG 2 (515 aa).

The disordered stretch occupies residues 1 to 22; that stretch reads MTMQTMTAASGHDAEAGTPPDG. 2 consecutive ABC transporter domains span residues 25-260 and 260-511; these read LALD…MVGR and RSIE…LIKL. 57–64 is an ATP binding site; that stretch reads GENGAGKS.

The protein belongs to the ABC transporter superfamily. Arabinose importer (TC 3.A.1.2.2) family. As to quaternary structure, the complex is composed of two ATP-binding proteins (AraG), two transmembrane proteins (AraH) and a solute-binding protein (AraF).

The protein resides in the cell inner membrane. It carries out the reaction L-arabinose(out) + ATP + H2O = L-arabinose(in) + ADP + phosphate + H(+). Functionally, part of the ABC transporter complex AraFGH involved in arabinose import. Responsible for energy coupling to the transport system. The sequence is that of Arabinose import ATP-binding protein AraG 2 from Burkholderia cenocepacia (strain HI2424).